The primary structure comprises 313 residues: LOB domain-containing protein 36 (313 aa).

The LOB domain maps to 6-107; sequence SPCAACKFLR…HDLENAKKEL (102 aa). The tract at residues 245-313 is disordered; it reads GNFVDSPSTN…SEEGRRNVIG (69 aa). Over residues 249 to 260 the composition is skewed to polar residues; it reads DSPSTNNNYHTD. A compositionally biased stretch (low complexity) spans 280 to 302; sequence PSQSSQPLPLQTQETQTQTQPNS.

The protein belongs to the LOB domain-containing protein family. In terms of tissue distribution, expressed in trichomes, at the base of many lateral organs, including branching points of the inflorescence and floral organs and in the distal part of the pistil at stages when style and stigma start to develop. Also detected in pedicels and at the base of petals and sepals.

Functionally, controls the proximal-distal patterning in petals and the adaxial-abaxial determination of leaves. Involved in the repression of the homeobox gene BP. The protein is LOB domain-containing protein 36 (LBD36) of Arabidopsis thaliana (Mouse-ear cress).